The following is a 345-amino-acid chain: Methylthioribose-1-phosphate isomerase (345 aa).

Residues 44-46 (RGA), Arg87, and Gln194 contribute to the substrate site. Asp235 acts as the Proton donor in catalysis. 245–246 (NK) contacts substrate.

This sequence belongs to the eIF-2B alpha/beta/delta subunits family. MtnA subfamily.

It catalyses the reaction 5-(methylsulfanyl)-alpha-D-ribose 1-phosphate = 5-(methylsulfanyl)-D-ribulose 1-phosphate. The protein operates within amino-acid biosynthesis; L-methionine biosynthesis via salvage pathway; L-methionine from S-methyl-5-thio-alpha-D-ribose 1-phosphate: step 1/6. In terms of biological role, catalyzes the interconversion of methylthioribose-1-phosphate (MTR-1-P) into methylthioribulose-1-phosphate (MTRu-1-P). In Heliobacterium modesticaldum (strain ATCC 51547 / Ice1), this protein is Methylthioribose-1-phosphate isomerase.